Here is a 157-residue protein sequence, read N- to C-terminus: SsrA-binding protein (157 aa).

Residues 138 to 151 (ATEAKRDWGREKQR) show a composition bias toward basic and acidic residues. The tract at residues 138–157 (ATEAKRDWGREKQRLLKQHS) is disordered.

The protein belongs to the SmpB family.

It is found in the cytoplasm. Its function is as follows. Required for rescue of stalled ribosomes mediated by trans-translation. Binds to transfer-messenger RNA (tmRNA), required for stable association of tmRNA with ribosomes. tmRNA and SmpB together mimic tRNA shape, replacing the anticodon stem-loop with SmpB. tmRNA is encoded by the ssrA gene; the 2 termini fold to resemble tRNA(Ala) and it encodes a 'tag peptide', a short internal open reading frame. During trans-translation Ala-aminoacylated tmRNA acts like a tRNA, entering the A-site of stalled ribosomes, displacing the stalled mRNA. The ribosome then switches to translate the ORF on the tmRNA; the nascent peptide is terminated with the 'tag peptide' encoded by the tmRNA and targeted for degradation. The ribosome is freed to recommence translation, which seems to be the essential function of trans-translation. The sequence is that of SsrA-binding protein from Cereibacter sphaeroides (strain ATCC 17025 / ATH 2.4.3) (Rhodobacter sphaeroides).